The primary structure comprises 495 residues: N-succinylglutamate 5-semialdehyde dehydrogenase (495 aa).

Residue 228–233 coordinates NAD(+); that stretch reads GSYATG. Catalysis depends on residues Glu-251 and Cys-285.

Belongs to the aldehyde dehydrogenase family. AstD subfamily.

The catalysed reaction is N-succinyl-L-glutamate 5-semialdehyde + NAD(+) + H2O = N-succinyl-L-glutamate + NADH + 2 H(+). The protein operates within amino-acid degradation; L-arginine degradation via AST pathway; L-glutamate and succinate from L-arginine: step 4/5. Catalyzes the NAD-dependent reduction of succinylglutamate semialdehyde into succinylglutamate. This chain is N-succinylglutamate 5-semialdehyde dehydrogenase, found in Legionella pneumophila (strain Paris).